A 318-amino-acid polypeptide reads, in one-letter code: Extracellular metalloprotease AO090012001025 (318 aa).

The signal sequence occupies residues 1-23 (MSHFPTLHILILVIANLQIQCFA). N-linked (GlcNAc...) asparagine glycosylation is found at N106, N121, and N193. H229 contacts Zn(2+). E230 is a catalytic residue. H233 provides a ligand contact to Zn(2+). The cysteines at positions 268 and 295 are disulfide-linked.

This sequence belongs to the peptidase M43B family.

It is found in the secreted. Secreted metalloproteinase that allows assimilation of proteinaceous substrates. The polypeptide is Extracellular metalloprotease AO090012001025 (Aspergillus oryzae (strain ATCC 42149 / RIB 40) (Yellow koji mold)).